Consider the following 457-residue polypeptide: Phosphatidate cytidylyltransferase (457 aa).

The next 6 helical transmembrane spans lie at 71–91 (VMISGFFITLASGHAWCIVLI), 154–174 (FIVTNHKFICYCLYLMGFVLF), 188–208 (GSLCVTHMVLLLVVFQAHLII), 214–234 (GLFWFLLPCGLVIVNDIFAYL), 255–275 (GFLGAWFFTALASIILTRILS), and 330–350 (FHALNLATFASLFAPFGGFFA).

Belongs to the CDS family. As to quaternary structure, homodimer. Mg(2+) is required as a cofactor.

The protein localises to the endoplasmic reticulum membrane. The protein resides in the cytoplasmic vesicle. It is found in the secretory vesicle. It catalyses the reaction a 1,2-diacyl-sn-glycero-3-phosphate + CTP + H(+) = a CDP-1,2-diacyl-sn-glycerol + diphosphate. The protein operates within phospholipid metabolism; CDP-diacylglycerol biosynthesis; CDP-diacylglycerol from sn-glycerol 3-phosphate: step 3/3. In terms of biological role, supplies CDP-diacylglycerol, which may play an important role as both a precursor to phosphoinositide biosynthesis in the plasma membrane and as a negative effector of phosphatidylinositol 4-kinase activity, thereby exerting an effect on cell proliferation via a lipid-dependent signal transduction cascade. The protein is Phosphatidate cytidylyltransferase (CDS1) of Saccharomyces cerevisiae (strain ATCC 204508 / S288c) (Baker's yeast).